A 447-amino-acid polypeptide reads, in one-letter code: Membrane metalloprotease ARASP, chloroplastic (447 aa).

A chloroplast-targeting transit peptide spans 1–73 (MLLNISSSPI…YPDGERFDFR (73 aa)). His102 is a binding site for Zn(2+). Residue Glu103 is part of the active site. His106 is a binding site for Zn(2+). The chain crosses the membrane as a helical span at residues 177-197 (SIVVSAGIIANVIFAYAIIFV). The PDZ domain maps to 202 to 244 (VGLPVQEAFPGVLVPEVKTFSAASRDGLLSGDVILAVDGTELS). Transmembrane regions (helical) follow at residues 379-399 (LAVI…ALIL) and 413-433 (VEQG…LFLI).

This sequence belongs to the peptidase M50A family. Zn(2+) is required as a cofactor. As to expression, expressed in green seedlings and cotyledons. Low levels of expression in roots, siliques and seeds.

It is found in the plastid. It localises to the chloroplast inner membrane. Metalloprotease essential for chloroplast and plant development. May be involved in regulated intramembrane proteolysis (RIP). This chain is Membrane metalloprotease ARASP, chloroplastic, found in Arabidopsis thaliana (Mouse-ear cress).